Consider the following 286-residue polypeptide: MGNLFCCVQVDQSTVAIKETFGKFEDVLEPGCHFLPWCLGSQVAGYLSLRVQQLDVRCETKTKDNVFVNVVASIQYRALANKANDAYYKLSNTRGQIQAYVFDVIRASVPKLLLDDVFEQKNDIAKAVEEELEKAMSAYGYEIVQTLIVDIEPDEHVKRAMNEINAAARMRLAANEKAEAEKILQIKRAEGEAESKYLSGLGIARQRQAIVDGLRDSVLGFAVNVPGTTAKDVMDMVLVTQYFDTMKEIGASSKSSAVFIPHGPGAVRDVASQIRDGLLQGSSANL.

Residue Gly-2 is the site of N-myristoyl glycine attachment. Residues Leu-114–Glu-190 adopt a coiled-coil conformation.

Self-interacts and forms heteromers. Interacts with NB-LRR class of R proteins before R proteins (e.g. RPS2 or RPM1) are activated by the effectors. Interacts with LRR1.

It is found in the cell membrane. Its function is as follows. Positive regulator of hypersensitive response (HR)-like cell death. May be involved in potassium ion channel regulation. The polypeptide is Hypersensitive-induced response protein 1 (Arabidopsis thaliana (Mouse-ear cress)).